The chain runs to 261 residues: Carnitinyl-CoA dehydratase (261 aa).

Glu111 serves as the catalytic Nucleophile. Catalysis depends on Glu131, which acts as the Proton acceptor.

Belongs to the enoyl-CoA hydratase/isomerase family.

It carries out the reaction (R)-carnitinyl-CoA = crotonobetainyl-CoA + H2O. The protein operates within amine and polyamine metabolism; carnitine metabolism. In terms of biological role, catalyzes the reversible dehydration of L-carnitinyl-CoA to crotonobetainyl-CoA. This is Carnitinyl-CoA dehydratase from Salmonella dublin (strain CT_02021853).